Reading from the N-terminus, the 253-residue chain is ATP synthase subunit a (253 aa).

6 helical membrane-spanning segments follow: residues 27–47 (ISFT…IGFF), 87–107 (FFPF…IGMV), 117–137 (IIVT…VGLI), 146–166 (LFAP…IEII), 196–216 (FTVM…LAFA), and 224–244 (LEFL…CVYL).

Belongs to the ATPase A chain family. As to quaternary structure, F-type ATPases have 2 components, CF(1) - the catalytic core - and CF(0) - the membrane proton channel. CF(1) has five subunits: alpha(3), beta(3), gamma(1), delta(1), epsilon(1). CF(0) has three main subunits: a(1), b(2) and c(9-12). The alpha and beta chains form an alternating ring which encloses part of the gamma chain. CF(1) is attached to CF(0) by a central stalk formed by the gamma and epsilon chains, while a peripheral stalk is formed by the delta and b chains.

Its subcellular location is the cell inner membrane. Key component of the proton channel; it plays a direct role in the translocation of protons across the membrane. The sequence is that of ATP synthase subunit a from Hyphomonas neptunium (strain ATCC 15444).